Reading from the N-terminus, the 594-residue chain is Pre-mRNA-processing protein 45 (594 aa).

Disordered regions lie at residues 36-63 (TTEY…RKGW), 223-254 (PPRF…TAQD), 370-426 (ETGI…SEMR), 498-523 (AGSS…SKDR), and 566-594 (EQFM…ARDE). Composition is skewed to pro residues over residues 44–53 (APLPATPGPQ) and 235–244 (PAEPPPPVLQ). Over residues 383-397 (GSEEESDEEEEDEEA) the composition is skewed to acidic residues. 3 stretches are compositionally biased toward basic and acidic residues: residues 398–417 (IRER…KEMR), 513–523 (EGIKEEMSKDR), and 578–594 (RTAE…ARDE).

The protein belongs to the SNW family. In terms of assembly, associated with the spliceosome.

It localises to the nucleus. In terms of biological role, involved in pre-mRNA splicing. The sequence is that of Pre-mRNA-processing protein 45 (PRP45) from Cryptococcus neoformans var. neoformans serotype D (strain B-3501A) (Filobasidiella neoformans).